Reading from the N-terminus, the 56-residue chain is MGPQGFYWSHPRKFGQGSRSCRVCSNRHGLIRKYGLNMCRQCFRQYAKDIGFIKLD.

Serine 9 carries the post-translational modification Phosphoserine. At arginine 12 the chain carries Omega-N-methylarginine. Zn(2+) is bound by residues cysteine 21, cysteine 24, cysteine 39, and cysteine 42. At lysine 48 the chain carries N6-acetyllysine.

It belongs to the universal ribosomal protein uS14 family. In terms of assembly, component of the 40S small ribosomal subunit. Requires Zn(2+) as cofactor.

It localises to the cytoplasm. Its subcellular location is the cytosol. The protein localises to the rough endoplasmic reticulum. In terms of biological role, component of the small ribosomal subunit. The ribosome is a large ribonucleoprotein complex responsible for the synthesis of proteins in the cell. This chain is Small ribosomal subunit protein uS14 (RPS29), found in Sus scrofa (Pig).